The sequence spans 493 residues: Glycylpeptide N-tetradecanoyltransferase (493 aa).

A disordered region spans residues 1-30 (MSDSKDSKGKAPQKPNDAEQTPGGKLTPQA). Tetradecanoyl-CoA contacts are provided by residues 82–85 (FKFW), 216–218 (LCI), and 224–228 (SKRLA). L493 functions as the Proton acceptor; via carboxylate in the catalytic mechanism.

Belongs to the NMT family. As to quaternary structure, monomer.

It localises to the cytoplasm. The enzyme catalyses N-terminal glycyl-[protein] + tetradecanoyl-CoA = N-tetradecanoylglycyl-[protein] + CoA + H(+). Its function is as follows. Adds a myristoyl group to the N-terminal glycine residue of certain cellular proteins. In Emericella nidulans (strain FGSC A4 / ATCC 38163 / CBS 112.46 / NRRL 194 / M139) (Aspergillus nidulans), this protein is Glycylpeptide N-tetradecanoyltransferase (swoF).